The following is a 140-amino-acid chain: Neurotrophin-7 (140 aa).

Residues 1-7 constitute a propeptide that is removed on maturation; sequence PGPRVRR. Disulfide bonds link Cys-21/Cys-101, Cys-64/Cys-129, and Cys-89/Cys-131.

This sequence belongs to the NGF-beta family.

It is found in the secreted. The chain is Neurotrophin-7 (ntf7) from Cyprinus carpio (Common carp).